Consider the following 126-residue polypeptide: Profilin-2 (126 aa).

Ser-2 carries the post-translational modification Blocked amino end (Ser). Position 104 is an N6,N6,N6-trimethyllysine (Lys-104).

Belongs to the profilin family. In terms of assembly, occurs in many kinds of cells as a complex with monomeric actin in a 1:1 ratio.

The protein localises to the cytoplasm. It is found in the cytoskeleton. In terms of biological role, binds to actin and affects the structure of the cytoskeleton. At high concentrations, profilin prevents the polymerization of actin, whereas it enhances it at low concentrations. By binding to PIP2, it inhibits the formation of IP3 and DG. This is Profilin-2 from Acanthamoeba castellanii (Amoeba).